The following is a 362-amino-acid chain: Ribosomal RNA large subunit methyltransferase M (362 aa).

S-adenosyl-L-methionine contacts are provided by residues serine 194, 227-230 (CPGG), aspartate 246, aspartate 266, and aspartate 284. Lysine 313 (proton acceptor) is an active-site residue.

It belongs to the class I-like SAM-binding methyltransferase superfamily. RNA methyltransferase RlmE family. RlmM subfamily. In terms of assembly, monomer.

It localises to the cytoplasm. It catalyses the reaction cytidine(2498) in 23S rRNA + S-adenosyl-L-methionine = 2'-O-methylcytidine(2498) in 23S rRNA + S-adenosyl-L-homocysteine + H(+). In terms of biological role, catalyzes the 2'-O-methylation at nucleotide C2498 in 23S rRNA. The sequence is that of Ribosomal RNA large subunit methyltransferase M from Aggregatibacter aphrophilus (strain NJ8700) (Haemophilus aphrophilus).